Consider the following 377-residue polypeptide: NADP-dependent oxidoreductase lnbE (377 aa).

Residues 170 to 173, 257 to 263, and 293 to 295 each bind NADP(+); these read GGNG, LTNPRVS, and SPV.

This sequence belongs to the NADP-dependent oxidoreductase L4BD family.

It participates in secondary metabolite biosynthesis. Functionally, NADP-dependent oxidoreductase; part of the lnb gene cluster that mediates the biosynthesis of diastereomeric piperazines. Lna and lnb clusters encode sets of enzymes that produce overlapping sets of previously undescribed metabolites such as piperazinomycin-like metabolites or morpholine. The lna and lnb biosynthetic pathways appear to be part of a signaling network that controls the formation of sclerotia, a resilient overwintering structure. One primary function of the non-canonical nonribosomal peptide synthetases lnaA and lnbA consists in the reduction of L-tyrosine. The presence in the clusters of tailoring enzymes such as the oxidoreductases lnaB, lnbB, lnaE or lnbE, as well as of the cytochrome P450 monooxygenases lnaC, lnaD, or lnbC, might explain formation of various diastereomeric piperazines. The protein is NADP-dependent oxidoreductase lnbE of Aspergillus flavus (strain ATCC 200026 / FGSC A1120 / IAM 13836 / NRRL 3357 / JCM 12722 / SRRC 167).